We begin with the raw amino-acid sequence, 597 residues long: 2-succinyl-5-enolpyruvyl-6-hydroxy-3-cyclohexene-1-carboxylate synthase (597 aa).

The protein belongs to the TPP enzyme family. MenD subfamily. In terms of assembly, homodimer. The cofactor is Mg(2+). Requires Mn(2+) as cofactor. It depends on thiamine diphosphate as a cofactor.

The enzyme catalyses isochorismate + 2-oxoglutarate + H(+) = 5-enolpyruvoyl-6-hydroxy-2-succinyl-cyclohex-3-ene-1-carboxylate + CO2. It participates in quinol/quinone metabolism; 1,4-dihydroxy-2-naphthoate biosynthesis; 1,4-dihydroxy-2-naphthoate from chorismate: step 2/7. The protein operates within cofactor biosynthesis; phylloquinone biosynthesis. Catalyzes the thiamine diphosphate-dependent decarboxylation of 2-oxoglutarate and the subsequent addition of the resulting succinic semialdehyde-thiamine pyrophosphate anion to isochorismate to yield 2-succinyl-5-enolpyruvyl-6-hydroxy-3-cyclohexene-1-carboxylate (SEPHCHC). The sequence is that of 2-succinyl-5-enolpyruvyl-6-hydroxy-3-cyclohexene-1-carboxylate synthase from Synechococcus sp. (strain JA-3-3Ab) (Cyanobacteria bacterium Yellowstone A-Prime).